The sequence spans 220 residues: Glutamine amidotransferase-like class 1 domain-containing protein 1 (220 aa).

Residues 1 to 38 form the signal peptide; the sequence is MASERLPNRPACLLVASGAAEGVSAQSFLHCFTMASTA. N-linked (GlcNAc...) asparagine glycosylation occurs at Asn201.

This sequence belongs to the peptidase C56 family. In terms of assembly, homotetramer. Component of the FERRY complex composed of five subunits, TBCK, PPP1R21, FERRY3, CRYZL1 and GATD1 with a ratio of 1:2:1:2:4, respectively.

The protein resides in the secreted. The protein localises to the early endosome. Its function is as follows. Component of the FERRY complex (Five-subunit Endosomal Rab5 and RNA/ribosome intermediary). The FERRY complex directly interacts with mRNAs and RAB5A, and functions as a RAB5A effector involved in the localization and the distribution of specific mRNAs most likely by mediating their endosomal transport. The complex recruits mRNAs and ribosomes to early endosomes through direct mRNA-interaction. The polypeptide is Glutamine amidotransferase-like class 1 domain-containing protein 1 (Homo sapiens (Human)).